The following is a 204-amino-acid chain: Allatotropin (204 aa).

The signal sequence occupies residues 1–20 (MNLTMQLAVIVAVCLCLAEG). Positions 21-35 (APDVRLTRTKQQRPT) are excised as a propeptide. The interval 47 to 83 (RGFGKRDRPHPRAERDVDHQAPSARPNRGTPTFKSPT) is disordered. The residue at position 49 (F49) is a Phenylalanine amide. Basic and acidic residues predominate over residues 50 to 65 (GKRDRPHPRAERDVDH). Residues 53-204 (DRPHPRAERD…LSSEELLRNF (152 aa)) constitute a propeptide that is removed on maturation.

In terms of tissue distribution, expressed extensively in the brain, frontal ganglion and terminal ganglion of the day 2 fifth instar larva (at protein level). Not expressed in the larval brain after day 4 of the fifth instar, or in the brain of the pupa or adult. Expression in the terminal ganglion is localized to cells in the posterior portion of the seventh neuromere of day 2 fifth instar larvae. In the pupa and adult expression is detected in the medial region of neuromere 6, the dorsal medial region of neuromere 7, and the posterior neuromere of the terminal ganglion (at protein level). In the frontal ganglion expression decreases in the wandering larvae and is present at low levels in during pupal ecdysis, but is not detected in the adult. Expressed in the subesophageal ganglion of day 2 fifth instar larva, but not at any time before or after day 2. Not expressed in the abdominal ganglia 1-6 of the day 2 fifth instar larva (at protein level). Expressed in the anterior neuromeres of the pterothoracic ganglion in pupa but not in adult (at protein level). Expressed in the unfused abdominal ganglia of day 10 pupae, and in pharate adult is expressed in median neurosecretory cells M1, M2 and M5, but not in median neurosecretory cells M3 and M4 (at protein level). Not expressed in the differentiated median neurosecretory cells M5 of the larva (at protein level). In the pharate adult brain isoform 3 is the predominant form, with lower levels of isoform 2 and very low levels of isoform 1 detected. In the pharate adult nerve cord isoform 3 is the predominant form, with lower levels of isoform 2 and no isoform 1 detected. In the pharate adult frontal ganglion isoform 3 is expressed, but not isoform 1 and isoform 2.

Its subcellular location is the secreted. Its function is as follows. Neuropeptide stimulator of juvenile hormone synthesis. Cardioregulatory neurohormone that increases heart beat rate in the adult but not in the larva. Inhibits active ion transport in the midgut of feeding fourth instar and day 2 fifth instar larva, but not in the midgut of pharate or wandering fifth instar larva. This Manduca sexta (Tobacco hawkmoth) protein is Allatotropin.